A 292-amino-acid chain; its full sequence is NAD kinase (292 aa).

The active-site Proton acceptor is the aspartate 73. NAD(+) contacts are provided by residues 73–74, 147–148, histidine 158, arginine 175, aspartate 177, 188–193, and glutamine 247; these read DG, NE, and TGYSLS.

This sequence belongs to the NAD kinase family. A divalent metal cation is required as a cofactor.

It localises to the cytoplasm. It catalyses the reaction NAD(+) + ATP = ADP + NADP(+) + H(+). Involved in the regulation of the intracellular balance of NAD and NADP, and is a key enzyme in the biosynthesis of NADP. Catalyzes specifically the phosphorylation on 2'-hydroxyl of the adenosine moiety of NAD to yield NADP. This is NAD kinase from Buchnera aphidicola subsp. Acyrthosiphon pisum (strain 5A).